We begin with the raw amino-acid sequence, 582 residues long: External alternative NAD(P)H-ubiquinone oxidoreductase B2, mitochondrial (582 aa).

The transit peptide at 1–38 (MRNFSVFERFSKAFKDHPSLTRILVVSTISGGGLIAYS) directs the protein to the mitochondrion. 60–90 (KVVLLGTGWAGTSFLKNLNNSQYEVQIISPR) is a binding site for FAD. 223–259 (LHFVVVGGGPTGVEFAAELHDFVTEDLVSLYPRAKGS) provides a ligand contact to NAD(+). One can recognise an EF-hand domain in the interval 379 to 414 (KVMEDVSAIFSKADKDKSGTLTLKEFQEAMDDICVR). Ca(2+) is bound by residues aspartate 392, aspartate 394, serine 396, threonine 398, and glutamate 403. Residues 573 to 582 (FIFGRDSSSI) carry the Microbody targeting signal motif.

It belongs to the NADH dehydrogenase family. FAD serves as cofactor. As to expression, mostly expressed in seedlings and roots and, to a lower extent, in cotyledons, leaves, stems, buds and flowers.

The protein resides in the mitochondrion inner membrane. It is found in the peroxisome. The catalysed reaction is a quinone + NADH + H(+) = a quinol + NAD(+). It catalyses the reaction a ubiquinone + NADH + H(+) = a ubiquinol + NAD(+). With respect to regulation, NADPH oxidase activity is stimulated by calcium ions. Its function is as follows. Alternative NADH-ubiquinone oxidoreductase which catalyzes the oxidation of mitochondrial NADH does not translocate protons across the inner mitochondrial membrane. Calcium-dependent NAD(P)H dehydrogenase; more efficient on NADH. Binds calcium ions. This is External alternative NAD(P)H-ubiquinone oxidoreductase B2, mitochondrial (NDB2) from Arabidopsis thaliana (Mouse-ear cress).